Reading from the N-terminus, the 687-residue chain is Dictomallein (687 aa).

Disordered stretches follow at residues 1–45 (MGNG…SRRL) and 73–112 (TAGG…STSA). The Peptidase M66 domain occupies 233 to 501 (PVFGTDADVQ…QAWIASRVLA (269 aa)). Residue His-393 participates in Zn(2+) binding. Residue Glu-394 is part of the active site. His-397 and His-403 together coordinate Zn(2+).

It belongs to the dictomallein family. Requires Zn(2+) as cofactor.

This chain is Dictomallein (dtmL), found in Burkholderia mallei (strain NCTC 10247).